Here is a 663-residue protein sequence, read N- to C-terminus: UvrABC system protein B (663 aa).

Residues 1 to 10 (MIDKRDDKPF) show a composition bias toward basic and acidic residues. Residues 1 to 23 (MIDKRDDKPFKLKSKYKPSGDQP) are disordered. Residues 31–418 (DNIEGGEKAQ…TNTIIEQIIR (388 aa)) form the Helicase ATP-binding domain. Position 44–51 (44–51 (GATGTGKT)) interacts with ATP. The Beta-hairpin motif lies at 97 to 120 (YYDYYQPEAYVPSSDTYIEKDSSV). A Helicase C-terminal domain is found at 435 to 597 (QMDDLLGEIN…IVPQTIKKDI (163 aa)). Residues 627-662 (KEAINALQKQMQEAAELLDFELAAQMRDLILELKLM) form the UVR domain.

Belongs to the UvrB family. Forms a heterotetramer with UvrA during the search for lesions. Interacts with UvrC in an incision complex.

The protein localises to the cytoplasm. The UvrABC repair system catalyzes the recognition and processing of DNA lesions. A damage recognition complex composed of 2 UvrA and 2 UvrB subunits scans DNA for abnormalities. Upon binding of the UvrA(2)B(2) complex to a putative damaged site, the DNA wraps around one UvrB monomer. DNA wrap is dependent on ATP binding by UvrB and probably causes local melting of the DNA helix, facilitating insertion of UvrB beta-hairpin between the DNA strands. Then UvrB probes one DNA strand for the presence of a lesion. If a lesion is found the UvrA subunits dissociate and the UvrB-DNA preincision complex is formed. This complex is subsequently bound by UvrC and the second UvrB is released. If no lesion is found, the DNA wraps around the other UvrB subunit that will check the other stand for damage. The sequence is that of UvrABC system protein B from Streptococcus pyogenes serotype M18 (strain MGAS8232).